The sequence spans 749 residues: Basic juvenile hormone-suppressible protein 2 (749 aa).

The N-terminal stretch at 1 to 14 (MRAVLLFVVSLAAL) is a signal peptide.

The protein belongs to the hemocyanin family. In terms of tissue distribution, fat body, and hemolymph of larvae.

This Trichoplusia ni (Cabbage looper) protein is Basic juvenile hormone-suppressible protein 2 (BJSP-2).